The primary structure comprises 345 residues: Myb/SANT-like DNA-binding domain-containing protein 4 (345 aa).

The Myb-like domain maps to 4 to 77 (LKRKRKSNFS…EVKRRYLDWR (74 aa)). K9 is covalently cross-linked (Glycyl lysine isopeptide (Lys-Gly) (interchain with G-Cter in SUMO2)). S106 bears the Phosphoserine mark. Glycyl lysine isopeptide (Lys-Gly) (interchain with G-Cter in SUMO2) cross-links involve residues K114 and K142. Residues 139 to 175 (TEVKVEEEERDPQSPEFEIEEEEEMLSSVIPDSRREN) are disordered. T188 is modified (phosphothreonine). A coiled-coil region spans residues 202 to 344 (HLLMNIEKQK…RLRIQKEGHL (143 aa)). Glycyl lysine isopeptide (Lys-Gly) (interchain with G-Cter in SUMO2) cross-links involve residues K237, K254, and K273.

This Mus musculus (Mouse) protein is Myb/SANT-like DNA-binding domain-containing protein 4 (Msantd4).